The chain runs to 387 residues: Ferrochelatase (387 aa).

Residues histidine 196 and glutamate 277 each contribute to the Fe cation site.

Belongs to the ferrochelatase family.

The protein resides in the cytoplasm. The catalysed reaction is heme b + 2 H(+) = protoporphyrin IX + Fe(2+). The protein operates within porphyrin-containing compound metabolism; protoheme biosynthesis; protoheme from protoporphyrin-IX: step 1/1. Catalyzes the ferrous insertion into protoporphyrin IX. This is Ferrochelatase from Rippkaea orientalis (strain PCC 8801 / RF-1) (Cyanothece sp. (strain PCC 8801)).